The following is a 944-amino-acid chain: E3 ubiquitin-protein ligase HACE1 (944 aa).

ANK repeat units follow at residues 23-55 (LPED…NSKF), 64-93 (VKRS…DPNY), 97-126 (SGCT…DVNI), 130-159 (EGLT…NVDV), 163-192 (MGQT…DINR), 196-226 (SGAT…YLPD), and 228-253 (NGVT…QHHP). The 336-residue stretch at 609–944 (NCEKLKQGIA…HCGSYGYTMA (336 aa)) folds into the HECT domain. Cys911 (glycyl thioester intermediate) is an active-site residue.

The protein resides in the golgi apparatus. The protein localises to the golgi stack membrane. It is found in the cytoplasm. It localises to the endoplasmic reticulum. It catalyses the reaction S-ubiquitinyl-[E2 ubiquitin-conjugating enzyme]-L-cysteine + [acceptor protein]-L-lysine = [E2 ubiquitin-conjugating enzyme]-L-cysteine + N(6)-ubiquitinyl-[acceptor protein]-L-lysine.. It functions in the pathway protein modification; protein ubiquitination. Its function is as follows. E3 ubiquitin-protein ligase involved in Golgi membrane fusion and regulation of small GTPases. Acts as a regulator of Golgi membrane dynamics during the cell cycle: recruited to Golgi membrane by Rab proteins and regulates postmitotic Golgi membrane fusion. Acts by mediating ubiquitination during mitotic Golgi disassembly, ubiquitination serving as a signal for Golgi reassembly later, after cell division. This Xenopus laevis (African clawed frog) protein is E3 ubiquitin-protein ligase HACE1 (hace1).